Here is a 500-residue protein sequence, read N- to C-terminus: NAD(P)H-quinone oxidoreductase chain 4, chloroplastic (500 aa).

14 helical membrane-spanning segments follow: residues 4-24 (FPWLTILVVLPIFAGSLIFFL), 37-57 (MSICLLEFLLMTYAFCYHFQL), 87-107 (LGSILLTGFMTTLATLAAWPV), 113-130 (LFYFLMLAMYSGQIGLFS), 134-154 (LLLFFIMWELELIPVYLLLSM), 167-187 (FILYTAGGSIFFLIGVLGMGL), 211-231 (ILFYFGFLIAYAVKLPIIPLH), 242-262 (HYSTCMLLAGILLKMGAYGLI), 272-292 (AHYLFSPWLVIIGAMQIIYAA), 313-333 (MGFIIIGIGSITNIGLNGAIL), 334-354 (QILSHGFIGATLFFLAGTACD), 386-406 (LALPGMSGFVAELVVFFGLIT), 417-437 (LITFVMAIGMILTPIYLLSML), and 462-482 (LFLLICIFLPVIGIGIYPDFV).

This sequence belongs to the complex I subunit 4 family.

Its subcellular location is the plastid. It localises to the chloroplast thylakoid membrane. The catalysed reaction is a plastoquinone + NADH + (n+1) H(+)(in) = a plastoquinol + NAD(+) + n H(+)(out). It catalyses the reaction a plastoquinone + NADPH + (n+1) H(+)(in) = a plastoquinol + NADP(+) + n H(+)(out). The chain is NAD(P)H-quinone oxidoreductase chain 4, chloroplastic from Oryza nivara (Indian wild rice).